Consider the following 619-residue polypeptide: Dihydroxy-acid dehydratase (619 aa).

D81 serves as a coordination point for Mg(2+). Residue C122 participates in [2Fe-2S] cluster binding. Positions 123 and 124 each coordinate Mg(2+). Residue K124 is modified to N6-carboxylysine. C195 is a [2Fe-2S] cluster binding site. E494 lines the Mg(2+) pocket. The Proton acceptor role is filled by S520.

The protein belongs to the IlvD/Edd family. Homodimer. The cofactor is [2Fe-2S] cluster. Requires Mg(2+) as cofactor.

It carries out the reaction (2R)-2,3-dihydroxy-3-methylbutanoate = 3-methyl-2-oxobutanoate + H2O. It catalyses the reaction (2R,3R)-2,3-dihydroxy-3-methylpentanoate = (S)-3-methyl-2-oxopentanoate + H2O. It functions in the pathway amino-acid biosynthesis; L-isoleucine biosynthesis; L-isoleucine from 2-oxobutanoate: step 3/4. It participates in amino-acid biosynthesis; L-valine biosynthesis; L-valine from pyruvate: step 3/4. Functions in the biosynthesis of branched-chain amino acids. Catalyzes the dehydration of (2R,3R)-2,3-dihydroxy-3-methylpentanoate (2,3-dihydroxy-3-methylvalerate) into 2-oxo-3-methylpentanoate (2-oxo-3-methylvalerate) and of (2R)-2,3-dihydroxy-3-methylbutanoate (2,3-dihydroxyisovalerate) into 2-oxo-3-methylbutanoate (2-oxoisovalerate), the penultimate precursor to L-isoleucine and L-valine, respectively. The chain is Dihydroxy-acid dehydratase from Shewanella frigidimarina (strain NCIMB 400).